The sequence spans 304 residues: Protein Largen (304 aa).

Positions 1–13 are enriched in polar residues; the sequence is MSAKSKGNPSSSC. Disordered stretches follow at residues 1-27, 66-91, 114-160, and 239-304; these read MSAK…TKVK, QLED…TASS, LTVL…GGLP, and HPPG…TTTV. Residues 33-70 adopt a coiled-coil conformation; the sequence is IVEDLELVLGDLKDVAKELKEVVDQIDTLTSDLQLEDE. Low complexity predominate over residues 77 to 91; that stretch reads TDTLNSSSSGTTASS. Pro residues-rich tracts occupy residues 120–129, 239–261, and 277–289; these read PNPPPPPPRL, HPPG…PPFP, and PIRP…PTAP.

Regulator of cell size that promotes cell size increase independently of mTOR and Hippo signaling pathways. Acts by stimulating the translation of specific mRNAs, including those encoding proteins affecting mitochondrial functions. Increases mitochondrial mass and respiration. The polypeptide is Protein Largen (PRR16) (Homo sapiens (Human)).